A 240-amino-acid polypeptide reads, in one-letter code: Dihydromonapterin reductase (240 aa).

Catalysis depends on tyrosine 152, which acts as the Proton acceptor.

The protein belongs to the short-chain dehydrogenases/reductases (SDR) family. FolM subfamily.

It carries out the reaction (6S)-5,6,7,8-tetrahydrofolate + NADP(+) = 7,8-dihydrofolate + NADPH + H(+). The enzyme catalyses 7,8-dihydromonapterin + NADPH + H(+) = 5,6,7,8-tetrahydromonapterin + NADP(+). Its function is as follows. Catalyzes the reduction of dihydromonapterin to tetrahydromonapterin. Also has lower activity with dihydrofolate. The chain is Dihydromonapterin reductase (folM) from Shigella sonnei (strain Ss046).